The sequence spans 286 residues: AB hydrolase superfamily protein YfhM (286 aa).

In terms of domain architecture, AB hydrolase-1 spans 27–272 (PLIVLLHGFP…ASHWINHEKP (246 aa)). Asp103 acts as the Nucleophile in catalysis. The active-site Proton donor is the Tyr210. His265 (proton acceptor) is an active-site residue.

The protein belongs to the AB hydrolase superfamily. Epoxide hydrolase family.

This chain is AB hydrolase superfamily protein YfhM (yfhM), found in Bacillus subtilis (strain 168).